Reading from the N-terminus, the 154-residue chain is Protein X (154 aa).

The tract at residues 68 to 117 (PCALRFTSARRMETTVNAHQVLPKVLHKRTLGLSAMSTTDLEAYFKDCLF) is mitochondrial targeting sequence.

It belongs to the orthohepadnavirus protein X family. As to quaternary structure, may form homodimer. May interact with host CEBPA, CFLAR, CREB1, DDB1, E4F1, HBXIP, HSPD1/HSP60, NFKBIA, POLR2E and SMAD4. Interacts with host SMC5-SMC6 complex and induces its degradation. Interacts with host TRPC4AP; leading to prevent ubiquitination of TRPC4AP. Interacts with host PLSCR1; this interaction promotes ubiquitination and degradation of HBx and impairs HBx-mediated cell proliferation. A fraction may be phosphorylated in insect cells and HepG2 cells, a human hepatoblastoma cell line. Phosphorylated in vitro by host protein kinase C or mitogen-activated protein kinase. N-acetylated in insect cells.

The protein localises to the host cytoplasm. It localises to the host nucleus. Its subcellular location is the host mitochondrion. Its function is as follows. Multifunctional protein that plays a role in silencing host antiviral defenses and promoting viral transcription. Does not seem to be essential for HBV infection. May be directly involved in development of cirrhosis and liver cancer (hepatocellular carcinoma). Most of cytosolic activities involve modulation of cytosolic calcium. The effect on apoptosis is controversial depending on the cell types in which the studies have been conducted. May induce apoptosis by localizing in mitochondria and causing loss of mitochondrial membrane potential. May also modulate apoptosis by binding host CFLAR, a key regulator of the death-inducing signaling complex (DISC). Promotes viral transcription by using the host E3 ubiquitin ligase DDB1 to target the SMC5-SMC6 complex to proteasomal degradation. This host complex would otherwise bind to viral episomal DNA, and prevents its transcription. Moderately stimulates transcription of many different viral and cellular transcription elements. Promoters and enhancers stimulated by HBx contain DNA binding sites for NF-kappa-B, AP-1, AP-2, c-EBP, ATF/CREB, or the calcium-activated factor NF-AT. The protein is Protein X of Hepatitis B virus genotype C subtype adr (isolate Japan/Nishioka/1983) (HBV-C).